The chain runs to 104 residues: Replication restart protein PriB (104 aa).

The region spanning 1-101 is the SSB domain; the sequence is MTNRLTLSGT…LHAEQIELID (101 aa).

The protein belongs to the PriB family. In terms of assembly, homodimer. Interacts with PriA and DnaT. Component of the replication restart primosome. Primosome assembly occurs via a 'hand-off' mechanism. PriA binds to replication forks, subsequently PriB then DnaT bind; DnaT then displaces ssDNA to generate the helicase loading substrate.

Its function is as follows. Involved in the restart of stalled replication forks, which reloads the replicative helicase on sites other than the origin of replication; the PriA-PriB pathway is the major replication restart pathway. During primosome assembly it facilitates complex formation between PriA and DnaT on DNA; stabilizes PriA on DNA. Stimulates the DNA unwinding activity of PriA helicase. The protein is Replication restart protein PriB of Salmonella typhi.